A 989-amino-acid chain; its full sequence is Atos homolog protein A (989 aa).

The segment at 24-32 (TLLITEGRT) is transactivation domain 1 (TAD1). 4 disordered regions span residues 244 to 295 (GEGG…LPPG), 393 to 477 (PDAL…KPAT), 525 to 639 (QNEQ…GLTQ), and 656 to 686 (EAEKHVRDGSTCLEKDENQEPHSSLSSTPAN). Low complexity predominate over residues 254–270 (RSSLRLPRSPLFSRSLH). A compositionally biased stretch (polar residues) spans 397 to 412 (FTSQEPPGHKTTWNST). Basic and acidic residues-rich tracts occupy residues 413-423 (QDKECLKKSKD) and 460-471 (TRLDRVDRESKT). Polar residues-rich tracts occupy residues 525–544 (QNEQVGSNHGAQTNGFVSLS) and 600–638 (TKSQPLTASNHQHYVSRESWTSLKNNSSHASSPQENGLT). Over residues 656-675 (EAEKHVRDGSTCLEKDENQE) the composition is skewed to basic and acidic residues. Over residues 676 to 686 (PHSSLSSTPAN) the composition is skewed to polar residues. The tract at residues 792–849 (LLGNFEECVLNYRLEPLGTVEGFTAEVGASGTFCPSHMTLPVDVSFYSVSDDNAPSPY) is required for macropage invasion. A transactivation domain 2 (TAD2) region spans residues 876 to 884 (FNPNKTVVK).

Belongs to the ATOS family.

It is found in the nucleus. Transcription regulator that syncronizes transcriptional and translational programs to promote macrophage invasion of tissues. The polypeptide is Atos homolog protein A (atosa) (Danio rerio (Zebrafish)).